Reading from the N-terminus, the 528-residue chain is Glutamyl-tRNA(Gln) amidotransferase subunit A, mitochondrial (528 aa).

The active-site Charge relay system is the Lys-76. Positions 147 to 166 (QYREKRKQNPHSKNEDSDWL) are disordered. Residue Ser-171 is the Charge relay system of the active site. Ser-195 (acyl-ester intermediate) is an active-site residue.

The protein belongs to the amidase family. GatA subfamily. As to quaternary structure, subunit of the heterotrimeric GatCAB amidotransferase (AdT) complex, composed of A (QRSL1), B (GATB) and C (GATC) subunits.

Its subcellular location is the mitochondrion. It catalyses the reaction L-glutamyl-tRNA(Gln) + L-glutamine + ATP + H2O = L-glutaminyl-tRNA(Gln) + L-glutamate + ADP + phosphate + H(+). Allows the formation of correctly charged Gln-tRNA(Gln) through the transamidation of misacylated Glu-tRNA(Gln) in the mitochondria. The reaction takes place in the presence of glutamine and ATP through an activated gamma-phospho-Glu-tRNA(Gln). The chain is Glutamyl-tRNA(Gln) amidotransferase subunit A, mitochondrial from Macaca fascicularis (Crab-eating macaque).